We begin with the raw amino-acid sequence, 106 residues long: Large ribosomal subunit protein bL21 (106 aa).

Belongs to the bacterial ribosomal protein bL21 family. Part of the 50S ribosomal subunit. Contacts protein L20.

In terms of biological role, this protein binds to 23S rRNA in the presence of protein L20. This Coprothermobacter proteolyticus (strain ATCC 35245 / DSM 5265 / OCM 4 / BT) protein is Large ribosomal subunit protein bL21.